The following is an 89-amino-acid chain: Small ribosomal subunit protein uS15 (89 aa).

The protein belongs to the universal ribosomal protein uS15 family. As to quaternary structure, part of the 30S ribosomal subunit. Forms a bridge to the 50S subunit in the 70S ribosome, contacting the 23S rRNA.

In terms of biological role, one of the primary rRNA binding proteins, it binds directly to 16S rRNA where it helps nucleate assembly of the platform of the 30S subunit by binding and bridging several RNA helices of the 16S rRNA. Forms an intersubunit bridge (bridge B4) with the 23S rRNA of the 50S subunit in the ribosome. The protein is Small ribosomal subunit protein uS15 of Shewanella sediminis (strain HAW-EB3).